Consider the following 288-residue polypeptide: Proteasome assembly chaperone 1 (288 aa).

At Ala2 the chain carries N-acetylalanine. Positions Pro13 to Arg35 are disordered. Thr18 bears the Phosphothreonine mark. The span at Glu26 to Arg35 shows a compositional bias: basic and acidic residues. Position 54 is a phosphothreonine (Thr54). Ser180 carries the post-translational modification Phosphoserine. Lys264 carries the N6-acetyllysine modification.

This sequence belongs to the PSMG1 family. In terms of assembly, forms a heterodimer with PSMG2. The PSMG1-PSMG2 heterodimer interacts directly with the PSMA5 and PSMA7 proteasome alpha subunits. In terms of processing, degraded by the proteasome upon completion of 20S proteasome maturation. In the adult, detected in brain, colon, leukocytes, breast and testis. Widely expressed in the fetus. Also expressed in a variety of proliferating cell lines.

It is found in the cytoplasm. It localises to the endoplasmic reticulum. Functionally, chaperone protein which promotes assembly of the 20S proteasome as part of a heterodimer with PSMG2. The PSMG1-PSMG2 heterodimer binds to the PSMA5 and PSMA7 proteasome subunits, promotes assembly of the proteasome alpha subunits into the heteroheptameric alpha ring and prevents alpha ring dimerization. The chain is Proteasome assembly chaperone 1 from Homo sapiens (Human).